A 299-amino-acid polypeptide reads, in one-letter code: Recombination-associated protein RdgC (299 aa).

This sequence belongs to the RdgC family.

The protein localises to the cytoplasm. It localises to the nucleoid. In terms of biological role, may be involved in recombination. The chain is Recombination-associated protein RdgC from Neisseria meningitidis serogroup C (strain 053442).